A 242-amino-acid polypeptide reads, in one-letter code: MLTRKIKLWDINAHITCRLCNGYLIDATTVTECLHTFCRSCLVKYLEENNTCPTCRIVIHQSHPLQYIGHDRTMQDIVYKLVPGLQEAEMRKQREFYHKLGMEVPGDIKAEILTVKQHVEAHRNGETKTDEHTHKEPPEEKQEEDHDYHRSDEQVSICLECNSSKLRGLKRKWIRCSAQATVLHLKKFIAKKLNLSSFNELDILCNEEILGKDHTLKFVVVTRWRFKKAPLLLHYRPKMDLL.

Residues 17-56 (CRLCNGYLIDATTVTECLHTFCRSCLVKYLEENNTCPTCR) form an RING-type zinc finger. The segment at 120–149 (EAHRNGETKTDEHTHKEPPEEKQEEDHDYH) is disordered.

In terms of assembly, component of a PRC1-like complex.

It localises to the nucleus. Its function is as follows. Component of a Polycomb group (PcG) multiprotein PRC1-like complex, a complex class required to maintain the transcriptionally repressive state of many genes, including Hox genes, throughout development. PcG PRC1 complex acts via chromatin remodeling and modification of histones; it mediates monoubiquitination of histone H2A 'Lys-119', rendering chromatin heritably changed in its expressibility. Within the PRC1-like complex, regulates RNF2 ubiquitin ligase activity. This is Polycomb group RING finger protein 3 (pcgf3) from Xenopus tropicalis (Western clawed frog).